The sequence spans 101 residues: Cysteine-rich and transmembrane domain-containing protein B (101 aa).

A disordered region spans residues 1–80 (MSQQPPAVGV…PQQQQQQKHS (80 aa)). Residues 24–43 (DAYPPPGQPYPQQGYPPPQG) show a composition bias toward pro residues. The span at 59–77 (YPEQGYPQQGYPPQQQQQQ) shows a compositional bias: low complexity. The chain crosses the membrane as a helical span at residues 78–95 (KHSPGMLEGCIAALCCYC).

The protein belongs to the CYSTM1 family.

The protein localises to the membrane. The polypeptide is Cysteine-rich and transmembrane domain-containing protein B (Arabidopsis thaliana (Mouse-ear cress)).